A 125-amino-acid chain; its full sequence is uncharacterized protein (125 aa).

The transit peptide at Met-1–Ser-46 directs the protein to the chloroplast.

The protein localises to the plastid. It is found in the chloroplast. This is an uncharacterized protein from Arabidopsis thaliana (Mouse-ear cress).